Consider the following 871-residue polypeptide: DNA mismatch repair protein MutS (871 aa).

Residue 630–637 (GPNMGGKS) participates in ATP binding. A disordered region spans residues 830 to 849 (KEEPESKSASPVEAALAGIN).

This sequence belongs to the DNA mismatch repair MutS family.

Functionally, this protein is involved in the repair of mismatches in DNA. It is possible that it carries out the mismatch recognition step. This protein has a weak ATPase activity. The polypeptide is DNA mismatch repair protein MutS (Verminephrobacter eiseniae (strain EF01-2)).